A 260-amino-acid polypeptide reads, in one-letter code: Factor V activator RVV-V gamma (260 aa).

An N-terminal signal peptide occupies residues 1–18; the sequence is MVLIKVLANLLVLQLSYA. Residues 19–24 constitute a propeptide that is removed on maturation; the sequence is QKSSEL. The Peptidase S1 domain occupies 25 to 251; sequence VVGGDECNIN…YNNWIQSIIA (227 aa). 6 disulfide bridges follow: Cys31/Cys165, Cys52/Cys68, Cys100/Cys258, Cys144/Cys212, Cys176/Cys191, and Cys202/Cys227. Catalysis depends on charge relay system residues His67 and Asp112. Ser206 functions as the Charge relay system in the catalytic mechanism. An N-linked (GlcNAc...) asparagine glycan is attached at Asn253.

It belongs to the peptidase S1 family. Snake venom subfamily. In terms of assembly, monomer. Expressed by the venom gland.

It localises to the secreted. It catalyses the reaction Fully activates human clotting factor V by a single cleavage at the 1545-Trp-Tyr-Leu-Arg-|-Ser-Asn-Asn-Gly-1552 bond. Cattle, but not rabbit, factor V is cleaved, and no other proteins of the clotting system are attacked. Esterase activity is observed on Bz-Arg-OEt and Tos-Arg-OMe, and amidase activity on Phe-pipecolyl-Arg-NHPhNO2.. Venom serine protease that selectively activates factor V (F5) in a calcium-independent manner. It cleaves the Arg(1545)-Ser(1546) linkage in the human factor V molecule. Induces the coagulation of mammalian plasma. In Daboia siamensis (Eastern Russel's viper), this protein is Factor V activator RVV-V gamma.